A 233-amino-acid chain; its full sequence is H-2 class II histocompatibility antigen, A-F alpha chain (233 aa).

The tract at residues 1 to 88 (EDDIEADHVG…KRSNFTPATN (88 aa)) is alpha-1. Residues 1 to 195 (EDDIEADHVG…IPAPMSELTE (195 aa)) are Extracellular-facing. Residues 89 to 182 (EAPQATVFPK…GLEEPVLKHW (94 aa)) are alpha-2. Residues 91 to 183 (PQATVFPKSP…LEEPVLKHWE (93 aa)) form the Ig-like C1-type domain. Cysteine 111 and cysteine 167 form a disulfide bridge. The N-linked (GlcNAc...) asparagine glycan is linked to asparagine 122. The segment at 183–195 (EPEIPAPMSELTE) is connecting peptide. Residues 196–221 (TVVCALGLSVGLVGIVVGTIFIIQGL) form a helical membrane-spanning segment. Topologically, residues 222–233 (RSGGTSRHPGPL) are cytoplasmic.

It belongs to the MHC class II family.

The protein resides in the membrane. The polypeptide is H-2 class II histocompatibility antigen, A-F alpha chain (H2-Aa) (Mus musculus (Mouse)).